A 1020-amino-acid polypeptide reads, in one-letter code: Sodium/potassium-transporting ATPase subunit alpha-2 (1020 aa).

Positions 1-5 (MGRGA) are excised as a propeptide. Residues 1 to 31 (MGRGAGREYSPAATTAENGGGKKKQKEKELD) form a disordered region. Residues 6–85 (GREYSPAATT…NALTPPPTTP (80 aa)) lie on the Cytoplasmic side of the membrane. Ser10 carries the phosphoserine modification. Residues 80-82 (PPP) are interaction with phosphoinositide-3 kinase. The helical transmembrane segment at 86–106 (EWVKFCRQLFGGFSILLWIGA) threads the bilayer. Residues 107 to 129 (ILCFLAYGIQAAMEDEPSNDNLY) are Extracellular-facing. Residues 130 to 150 (LGVVLAAVVIVTGCFSYYQEA) form a helical membrane-spanning segment. Over 151–286 (KSSKIMDSFK…VGRTPIAMEI (136 aa)) the chain is Cytoplasmic. The span at 212 to 227 (DNSSLTGESEPQTRSP) shows a compositional bias: polar residues. Residues 212-231 (DNSSLTGESEPQTRSPEFTH) form a disordered region. Residues 287 to 306 (EHFIQLITGVAVFPGVSFFV) traverse the membrane as a helical segment. Residues 307-318 (LSLILGYSWLEA) are Extracellular-facing. The chain crosses the membrane as a helical span at residues 319-336 (VIFLIGIIVANVPEGLLA). Residues 337–769 (TVTVCLTLTA…EEGRLVFDNL (433 aa)) are Cytoplasmic-facing. The 4-aspartylphosphate intermediate role is filled by Asp374. Residues Ser439, Ser450, Ser496, and Ser559 each carry the phosphoserine modification. Position 570 is a phosphothreonine (Thr570). Phosphoserine occurs at positions 587 and 672. Positions 714 and 718 each coordinate Mg(2+). The helical transmembrane segment at 770-789 (KKSIAYTLTSNIPEITPFLL) threads the bilayer. Over 790–799 (FIIANIPLPL) the chain is Extracellular. Residues 800–820 (GTVTILCIDLGTDMVPAISLA) traverse the membrane as a helical segment. Residues 821-840 (YEAAESDIMKRQPRNSQTDK) are Cytoplasmic-facing. Ser826 carries the post-translational modification Phosphoserine. Residues 841–863 (LVNERLISMAYGQIGMIQALGGF) traverse the membrane as a helical segment. Residues 864-915 (FTYFVILAENGFLPSRLLGIRLDWDDRTMNDLEDSYGQEWTYEQRKVVEFTC) are Extracellular-facing. A helical transmembrane segment spans residues 916–935 (HTAFFASIVVVQWADLIICK). Residues 936-948 (TRRNSVFQQGMKN) are Cytoplasmic-facing. Phosphoserine; by PKA is present on Ser940. The chain crosses the membrane as a helical span at residues 949–967 (KILIFGLLEETALAAFLSY). The Extracellular segment spans residues 968 to 982 (CPGMGVALRMYPLKV). The chain crosses the membrane as a helical span at residues 983 to 1003 (TWWFCAFPYSLLIFIYDEVRK). Residues 1004 to 1020 (LILRRYPGGWVEKETYY) lie on the Cytoplasmic side of the membrane.

It belongs to the cation transport ATPase (P-type) (TC 3.A.3) family. Type IIC subfamily. The sodium/potassium-transporting ATPase is composed of a catalytic alpha subunit, an auxiliary non-catalytic beta subunit and an additional regulatory subunit. Interacts with regulatory subunit FXYD1.

It is found in the membrane. The protein resides in the cell membrane. The catalysed reaction is K(+)(out) + Na(+)(in) + ATP + H2O = K(+)(in) + Na(+)(out) + ADP + phosphate + H(+). In terms of biological role, this is the catalytic component of the active enzyme, which catalyzes the hydrolysis of ATP coupled with the exchange of sodium and potassium ions across the plasma membrane. This action creates the electrochemical gradient of sodium and potassium, providing the energy for active transport of various nutrients. The chain is Sodium/potassium-transporting ATPase subunit alpha-2 (ATP1A2) from Pongo abelii (Sumatran orangutan).